Here is a 941-residue protein sequence, read N- to C-terminus: Bifunctional glutamine synthetase adenylyltransferase/adenylyl-removing enzyme (941 aa).

Residues 1 to 431 (MSSAPPFAAA…TFRNAFRLAG (431 aa)) form an adenylyl removase region. The adenylyl transferase stretch occupies residues 447–941 (NGHGMRPHAG…DGTIAQAEVK (495 aa)).

Belongs to the GlnE family. The cofactor is Mg(2+).

The enzyme catalyses [glutamine synthetase]-O(4)-(5'-adenylyl)-L-tyrosine + phosphate = [glutamine synthetase]-L-tyrosine + ADP. The catalysed reaction is [glutamine synthetase]-L-tyrosine + ATP = [glutamine synthetase]-O(4)-(5'-adenylyl)-L-tyrosine + diphosphate. In terms of biological role, involved in the regulation of glutamine synthetase GlnA, a key enzyme in the process to assimilate ammonia. When cellular nitrogen levels are high, the C-terminal adenylyl transferase (AT) inactivates GlnA by covalent transfer of an adenylyl group from ATP to specific tyrosine residue of GlnA, thus reducing its activity. Conversely, when nitrogen levels are low, the N-terminal adenylyl removase (AR) activates GlnA by removing the adenylyl group by phosphorolysis, increasing its activity. The regulatory region of GlnE binds the signal transduction protein PII (GlnB) which indicates the nitrogen status of the cell. This is Bifunctional glutamine synthetase adenylyltransferase/adenylyl-removing enzyme from Bordetella bronchiseptica (strain ATCC BAA-588 / NCTC 13252 / RB50) (Alcaligenes bronchisepticus).